A 240-amino-acid polypeptide reads, in one-letter code: uncharacterized protein (240 aa).

Residues 1–11 (MGMTPRRKRRG) are compositionally biased toward basic residues. The interval 1 to 32 (MGMTPRRKRRGGAVQITRPTGRPRTPTTQTTK) is disordered. The span at 17 to 31 (TRPTGRPRTPTTQTT) shows a compositional bias: low complexity. Transmembrane regions (helical) follow at residues 36–56 (WVVG…VELI), 93–113 (LMAN…AGLS), 115–135 (FVWA…LIGN), 146–166 (IGAS…GLFV), 172–192 (IVIG…AMPV), and 198–218 (GVSW…AYLL).

This sequence to M.leprae ML1171.

The protein resides in the cell membrane. This is an uncharacterized protein from Mycobacterium tuberculosis (strain CDC 1551 / Oshkosh).